The chain runs to 460 residues: Probable carboxypeptidase ARB_01041 (460 aa).

The first 22 residues, 1-22, serve as a signal peptide directing secretion; the sequence is MQKTYIWALVSLLASSLVDARS. Asn98 is a glycosylation site (N-linked (GlcNAc...) asparagine). Asp175 provides a ligand contact to Zn(2+). Glu207 serves as the catalytic Proton acceptor. Position 208 (Glu208) interacts with Zn(2+). N-linked (GlcNAc...) asparagine glycosylation occurs at Asn395.

The protein belongs to the peptidase M20A family. Zn(2+) serves as cofactor.

The protein localises to the secreted. The polypeptide is Probable carboxypeptidase ARB_01041 (Arthroderma benhamiae (strain ATCC MYA-4681 / CBS 112371) (Trichophyton mentagrophytes)).